The chain runs to 223 residues: Deoxyribose-phosphate aldolase (223 aa).

Residue Asp89 is the Proton donor/acceptor of the active site. The Schiff-base intermediate with acetaldehyde role is filled by Lys152. The active-site Proton donor/acceptor is the Lys181.

It belongs to the DeoC/FbaB aldolase family. DeoC type 1 subfamily.

It is found in the cytoplasm. The enzyme catalyses 2-deoxy-D-ribose 5-phosphate = D-glyceraldehyde 3-phosphate + acetaldehyde. The protein operates within carbohydrate degradation; 2-deoxy-D-ribose 1-phosphate degradation; D-glyceraldehyde 3-phosphate and acetaldehyde from 2-deoxy-alpha-D-ribose 1-phosphate: step 2/2. Catalyzes a reversible aldol reaction between acetaldehyde and D-glyceraldehyde 3-phosphate to generate 2-deoxy-D-ribose 5-phosphate. The sequence is that of Deoxyribose-phosphate aldolase from Bacillus cereus (strain G9842).